Consider the following 374-residue polypeptide: Queuine tRNA-ribosyltransferase (374 aa).

Catalysis depends on aspartate 89, which acts as the Proton acceptor. Substrate-binding positions include 89 to 93 (DSGGF), aspartate 143, glutamine 187, and glycine 214. The segment at 245–251 (GVGKPED) is RNA binding. The Nucleophile role is filled by aspartate 264. The tract at residues 269 to 273 (TRNAR) is RNA binding; important for wobble base 34 recognition. Zn(2+) is bound by residues cysteine 302, cysteine 304, cysteine 307, and histidine 333.

The protein belongs to the queuine tRNA-ribosyltransferase family. In terms of assembly, homodimer. Within each dimer, one monomer is responsible for RNA recognition and catalysis, while the other monomer binds to the replacement base PreQ1. The cofactor is Zn(2+).

The enzyme catalyses 7-aminomethyl-7-carbaguanine + guanosine(34) in tRNA = 7-aminomethyl-7-carbaguanosine(34) in tRNA + guanine. It participates in tRNA modification; tRNA-queuosine biosynthesis. Functionally, catalyzes the base-exchange of a guanine (G) residue with the queuine precursor 7-aminomethyl-7-deazaguanine (PreQ1) at position 34 (anticodon wobble position) in tRNAs with GU(N) anticodons (tRNA-Asp, -Asn, -His and -Tyr). Catalysis occurs through a double-displacement mechanism. The nucleophile active site attacks the C1' of nucleotide 34 to detach the guanine base from the RNA, forming a covalent enzyme-RNA intermediate. The proton acceptor active site deprotonates the incoming PreQ1, allowing a nucleophilic attack on the C1' of the ribose to form the product. After dissociation, two additional enzymatic reactions on the tRNA convert PreQ1 to queuine (Q), resulting in the hypermodified nucleoside queuosine (7-(((4,5-cis-dihydroxy-2-cyclopenten-1-yl)amino)methyl)-7-deazaguanosine). This Shewanella baltica (strain OS223) protein is Queuine tRNA-ribosyltransferase.